Here is a 625-residue protein sequence, read N- to C-terminus: Very-long-chain aldehyde decarbonylase CER1 (625 aa).

5 consecutive transmembrane segments (helical) span residues 45-65 (LGYF…QVWI), 126-146 (GVLM…YWLH), 177-197 (PFAE…TTLL), 200-220 (TASI…NNMG), and 329-349 (LLWP…RLFV). A Fatty acid hydroxylase domain is found at 138-272 (VEFLYYWLHK…MPLYDYIYGT (135 aa)).

It belongs to the sterol desaturase family. Homodimer. Interacts with CER3, CYTB5-B, CYTB5-C, CYTB5-D and CYTB5-E. Expressed in seedlings, stems, leaves, flowers, fruits and siliques. Not detected in roots, pollen and seeds. Expressed in trichomes, cotyledons, shoot apical meristem and leaf primordia. Preferentially associated with young leaves rather than mature leaves. Expressed in the epidermis of the stem and caulines leaves, in the carpels and the sepals.

It localises to the endoplasmic reticulum membrane. It carries out the reaction a long-chain fatty aldehyde + 2 NADPH + O2 + H(+) = a long-chain alkane + formate + 2 NADP(+) + H2O. Aldehyde decarbonylase involved in the conversion of aldehydes to alkanes. Core component of a very-long-chain alkane synthesis complex. Involved in epicuticular wax biosynthesis and pollen fertility. The polypeptide is Very-long-chain aldehyde decarbonylase CER1 (CER1) (Arabidopsis thaliana (Mouse-ear cress)).